The primary structure comprises 480 residues: Zinc metalloproteinase/disintegrin (480 aa).

The first 20 residues, 1-20 (MIQVLLITICLAVFPFQGSS), serve as a signal peptide directing secretion. Residues 21 to 190 (IVLDSGNLNE…KASQLNVSPD (170 aa)) constitute a propeptide that is removed on maturation. One can recognise a Peptidase M12B domain in the interval 197 to 391 (RFIKLAIYVD…HSPQCILNDP (195 aa)). 2 N-linked (GlcNAc...) asparagine glycosylation sites follow: Asn-259 and Asn-279. Cystine bridges form between Cys-308–Cys-386, Cys-348–Cys-370, Cys-350–Cys-353, Cys-413–Cys-428, Cys-415–Cys-423, Cys-422–Cys-445, Cys-436–Cys-442, Cys-441–Cys-466, and Cys-454–Cys-473. Residue His-333 coordinates Zn(2+). The active site involves Glu-334. The Zn(2+) site is built by His-337 and His-343. In terms of domain architecture, Disintegrin spans 399 to 480 (TPVSGNELLE…AGCPRNPFHA (82 aa)). The Cell attachment site motif lies at 458 to 460 (RGD).

This sequence belongs to the venom metalloproteinase (M12B) family. P-II subfamily. P-IIa sub-subfamily. Monomer. Requires Zn(2+) as cofactor. Expressed by the venom gland.

It localises to the secreted. Functionally, impairs hemostasis in the envenomed animal. In terms of biological role, inhibits platelet aggregation and bone resorption. The sequence is that of Zinc metalloproteinase/disintegrin from Gloydius halys (Chinese water mocassin).